The chain runs to 356 residues: Ferrochelatase (356 aa).

Fe cation contacts are provided by His214 and Glu295.

This sequence belongs to the ferrochelatase family.

The protein localises to the cytoplasm. It carries out the reaction heme b + 2 H(+) = protoporphyrin IX + Fe(2+). Its pathway is porphyrin-containing compound metabolism; protoheme biosynthesis; protoheme from protoporphyrin-IX: step 1/1. Functionally, catalyzes the ferrous insertion into protoporphyrin IX. This Paraburkholderia phytofirmans (strain DSM 17436 / LMG 22146 / PsJN) (Burkholderia phytofirmans) protein is Ferrochelatase.